A 533-amino-acid chain; its full sequence is Beta-apo-4'-carotenal oxygenase (533 aa).

Active-site residues include E226 and C260.

Belongs to the aldehyde dehydrogenase family.

The enzyme catalyses 4'-apo-beta-carotenal + NAD(+) + H2O = neurosporaxanthin + NADH + 2 H(+). Functionally, beta-apo-4'-carotenal oxygenase involved in the last step of synthesis of neurosporaxanthin, a carboxylic apocarotenoid acting as an essential protective pigment and leading to orange pigmentation. Converts the aldehyde beta-apo-4'-carotenal into neurosporaxanthin. Neurosporaxanthin is synthesized from geranyl-geranyl pyrophosphate (GGPP) through several enzymatic activities. Phytoene synthase activity performed by the bifunctional enzyme al-2 first produces phytoene from geranyl-geranyl pyrophosphate (GGPP). The phytoene dehydrogenase al-1 then introduces 5 desaturations to lead to 3,4-didehydrolycopene via the intermediates phytofluene, zeta-carotene, neurosporene and lycopene. Al-2 cyclase activity then converts 3,4-didehydrolycopene into torulene. Al-2 can also convet lycopene into gamma-carotene which in turn is converted to beta-carotene by an additional al-2 cyclization reaction. Torulene is the substrate of the dioxidase cao-2 that breaks the molecule, removing five carbon atoms to yield beta-apo-4'-carotenal, whereas the aldehyde dehydrogenase ylo-1 mediates the last step by converting beta-apo-4'-carotenal into neurosporaxanthin. The protein is Beta-apo-4'-carotenal oxygenase of Neurospora crassa (strain ATCC 24698 / 74-OR23-1A / CBS 708.71 / DSM 1257 / FGSC 987).